A 127-amino-acid polypeptide reads, in one-letter code: Aspartate 1-decarboxylase (127 aa).

Ser25 functions as the Schiff-base intermediate with substrate; via pyruvic acid in the catalytic mechanism. The residue at position 25 (Ser25) is a Pyruvic acid (Ser). Thr57 serves as a coordination point for substrate. Residue Tyr58 is the Proton donor of the active site. Gly73–Ala75 contacts substrate.

It belongs to the PanD family. Heterooctamer of four alpha and four beta subunits. Pyruvate serves as cofactor. In terms of processing, is synthesized initially as an inactive proenzyme, which is activated by self-cleavage at a specific serine bond to produce a beta-subunit with a hydroxyl group at its C-terminus and an alpha-subunit with a pyruvoyl group at its N-terminus.

Its subcellular location is the cytoplasm. The catalysed reaction is L-aspartate + H(+) = beta-alanine + CO2. It functions in the pathway cofactor biosynthesis; (R)-pantothenate biosynthesis; beta-alanine from L-aspartate: step 1/1. Functionally, catalyzes the pyruvoyl-dependent decarboxylation of aspartate to produce beta-alanine. This is Aspartate 1-decarboxylase from Anoxybacillus flavithermus (strain DSM 21510 / WK1).